The chain runs to 312 residues: Ribosomal RNA small subunit methyltransferase H (312 aa).

Residues 35–37 (GGH), D55, F79, D100, and Q107 contribute to the S-adenosyl-L-methionine site.

Belongs to the methyltransferase superfamily. RsmH family.

Its subcellular location is the cytoplasm. The enzyme catalyses cytidine(1402) in 16S rRNA + S-adenosyl-L-methionine = N(4)-methylcytidine(1402) in 16S rRNA + S-adenosyl-L-homocysteine + H(+). Its function is as follows. Specifically methylates the N4 position of cytidine in position 1402 (C1402) of 16S rRNA. The protein is Ribosomal RNA small subunit methyltransferase H of Azoarcus sp. (strain BH72).